Consider the following 302-residue polypeptide: 33 kDa chaperonin (302 aa).

Cystine bridges form between Cys234-Cys236 and Cys267-Cys270.

It belongs to the HSP33 family. Under oxidizing conditions two disulfide bonds are formed involving the reactive cysteines. Under reducing conditions zinc is bound to the reactive cysteines and the protein is inactive.

Its subcellular location is the cytoplasm. Functionally, redox regulated molecular chaperone. Protects both thermally unfolding and oxidatively damaged proteins from irreversible aggregation. Plays an important role in the bacterial defense system toward oxidative stress. This chain is 33 kDa chaperonin, found in Neisseria gonorrhoeae (strain ATCC 700825 / FA 1090).